The chain runs to 55 residues: Large ribosomal subunit protein bL33 (55 aa).

This sequence belongs to the bacterial ribosomal protein bL33 family.

This is Large ribosomal subunit protein bL33 from Yersinia enterocolitica serotype O:8 / biotype 1B (strain NCTC 13174 / 8081).